We begin with the raw amino-acid sequence, 341 residues long: tRNA N6-adenosine threonylcarbamoyltransferase (341 aa).

Residues His117 and His121 each contribute to the Fe cation site. Residues 139-143 (VVSGG), Asp172, Gly185, Asp189, and Asn278 each bind substrate. Asp307 lines the Fe cation pocket.

The protein belongs to the KAE1 / TsaD family. Fe(2+) serves as cofactor.

The protein resides in the cytoplasm. It catalyses the reaction L-threonylcarbamoyladenylate + adenosine(37) in tRNA = N(6)-L-threonylcarbamoyladenosine(37) in tRNA + AMP + H(+). In terms of biological role, required for the formation of a threonylcarbamoyl group on adenosine at position 37 (t(6)A37) in tRNAs that read codons beginning with adenine. Is involved in the transfer of the threonylcarbamoyl moiety of threonylcarbamoyl-AMP (TC-AMP) to the N6 group of A37, together with TsaE and TsaB. TsaD likely plays a direct catalytic role in this reaction. The polypeptide is tRNA N6-adenosine threonylcarbamoyltransferase (Bacillus licheniformis (strain ATCC 14580 / DSM 13 / JCM 2505 / CCUG 7422 / NBRC 12200 / NCIMB 9375 / NCTC 10341 / NRRL NRS-1264 / Gibson 46)).